We begin with the raw amino-acid sequence, 411 residues long: uncharacterized protein (411 aa).

Residues 1–21 form the signal peptide; sequence MHSRILLLLLMFAFNVGLINC. The EGF-like domain occupies 28 to 67; that stretch reads PQSNCKIRCENGGMCVFDLERPDFHSCICLLGVYTGDRCQ. 3 disulfides stabilise this stretch: C32/C42, C36/C54, and C56/C66. A compositionally biased stretch (polar residues) spans 78–97; it reads TATSDETSHPMNIQHQQSQA. 2 disordered regions span residues 78–312 and 337–375; these read TATS…EPIR and HPIE…EYGM. Over residues 100 to 230 the composition is skewed to basic and acidic residues; the sequence is DDARRRDDER…VEKELNDKRT (131 aa). Residues 237-266 are compositionally biased toward acidic residues; sequence FEYEGGDEEYPQVAEKEDEYDEGYETDNTE. The span at 267-276 shows a compositional bias: low complexity; it reads DVTITTTKTT.

This is an uncharacterized protein from Caenorhabditis elegans.